A 181-amino-acid polypeptide reads, in one-letter code: MEQFRGTTILSVRRNGKVVIGGDGQVSMGSTIMKANARKVRRLYNGKVIAGFAGGTADAFTLFERFESKLEKHSGNLTRAAVELAKDWRTDRILRRLEALLTVADSKASLIITGLGDVIEPEQSLMAIGSGGSFAQAAAKALLENTKLSARKIVEKALTIAADICIYTNLNFTIEELDSES.

Residue T7 is part of the active site. Residues A162, C165, and T168 each contribute to the Na(+) site.

Belongs to the peptidase T1B family. HslV subfamily. A double ring-shaped homohexamer of HslV is capped on each side by a ring-shaped HslU homohexamer. The assembly of the HslU/HslV complex is dependent on binding of ATP.

It is found in the cytoplasm. The enzyme catalyses ATP-dependent cleavage of peptide bonds with broad specificity.. With respect to regulation, allosterically activated by HslU binding. In terms of biological role, protease subunit of a proteasome-like degradation complex believed to be a general protein degrading machinery. This Coxiella burnetii (strain RSA 493 / Nine Mile phase I) protein is ATP-dependent protease subunit HslV.